We begin with the raw amino-acid sequence, 444 residues long: NADH-ubiquinone oxidoreductase chain 4 (444 aa).

The next 13 helical transmembrane spans lie at 4–24 (YLFM…WWLV), 28–48 (IFLL…LSMI), 53–73 (GVDF…CLMI), 87–107 (NFFV…FSSL), 109–129 (LFSF…LILG), 141–161 (VYLM…LFSI), 173–193 (LIDF…AFLV), 212–232 (PISG…YGIF), 245–265 (FNYF…FVCF), 272–294 (SLIA…TMNW), 306–326 (GHGI…ELLG), 330–350 (LLIN…WFLL), and 373–393 (IISW…FSAV).

It belongs to the complex I subunit 4 family.

Its subcellular location is the mitochondrion membrane. It catalyses the reaction a ubiquinone + NADH + 5 H(+)(in) = a ubiquinol + NAD(+) + 4 H(+)(out). Its function is as follows. Core subunit of the mitochondrial membrane respiratory chain NADH dehydrogenase (Complex I) that is believed to belong to the minimal assembly required for catalysis. Complex I functions in the transfer of electrons from NADH to the respiratory chain. The immediate electron acceptor for the enzyme is believed to be ubiquinone. The sequence is that of NADH-ubiquinone oxidoreductase chain 4 (ND4) from Locusta migratoria (Migratory locust).